The chain runs to 372 residues: Delta-type opioid receptor (372 aa).

The Extracellular portion of the chain corresponds to 1–47 (MEPVPSARAELQFSLLANVSDTFPSAFPSASANASGSPGARSASSLA). N-linked (GlcNAc...) asparagine glycans are attached at residues Asn-18 and Asn-33. Residues 48-75 (LAIAITALYSAVCAVGLLGNVLVMFGIV) form a helical membrane-spanning segment. Topologically, residues 76–85 (RYTKLKTATN) are cytoplasmic. The chain crosses the membrane as a helical span at residues 86-110 (IYIFNLALADALATSTLPFQSAKYL). Over 111-122 (METWPFGELLCK) the chain is Extracellular. The cysteines at positions 121 and 198 are disulfide-linked. Residues 123 to 144 (AVLSIDYYNMFTSIFTLTMMSV) form a helical membrane-spanning segment. Residues 145-163 (DRYIAVCHPVKALDFRTPA) are Cytoplasmic-facing. The chain crosses the membrane as a helical span at residues 164 to 186 (KAKLINICIWVLASGVGVPIMVM). The Extracellular segment spans residues 187-206 (AVTQPRDGAVVCTLQFPSPS). Residues 207-238 (WYWDTVTKICVFLFAFVVPILIITVCYGLMLL) form a helical membrane-spanning segment. At 239–261 (RLRSVRLLSGSKEKDRSLRRITR) the chain is on the cytoplasmic side. Residues 262 to 284 (MVLVVVGAFVVCWAPIHIFVIVW) form a helical membrane-spanning segment. Over 285 to 299 (TLVDINRRDPLVVAA) the chain is Extracellular. A helical membrane pass occupies residues 300 to 321 (LHLCIALGYANSSLNPVLYAFL). At 322-372 (DENFKRCFRQLCRAPCGGQEPGSLRRPRQATARERVTACTPSDGPGGGAAA) the chain is on the cytoplasmic side. Cys-333 is lipidated: S-palmitoyl cysteine. Residues 340 to 372 (QEPGSLRRPRQATARERVTACTPSDGPGGGAAA) form a disordered region.

This sequence belongs to the G-protein coupled receptor 1 family. May form homooligomers. Forms a heterodimer with OPRM1. Interacts with GPRASP1. Interacts with RTP4; the interaction promotes cell surface localization of the OPRD1-OPRM1 heterodimer. In terms of processing, ubiquitinated. A basal ubiquitination seems not to be related to degradation. Ubiquitination is increased upon formation of OPRM1:OPRD1 oligomers leading to proteasomal degradation; the ubiquitination is diminished by RTP4. As to expression, detected in brain, brain stem and brain cortex.

Its subcellular location is the cell membrane. Functionally, G-protein coupled receptor that functions as a receptor for endogenous enkephalins and for a subset of other opioids. Ligand binding causes a conformation change that triggers signaling via guanine nucleotide-binding proteins (G proteins) and modulates the activity of down-stream effectors, such as adenylate cyclase. Signaling leads to the inhibition of adenylate cyclase activity. Inhibits neurotransmitter release by reducing calcium ion currents and increasing potassium ion conductance. Plays a role in the perception of pain and in opiate-mediated analgesia. Plays a role in developing analgesic tolerance to morphine. The chain is Delta-type opioid receptor (Oprd1) from Rattus norvegicus (Rat).